A 438-amino-acid chain; its full sequence is MANYISSVLKSLLLLLHLVFLIQQHVDSASIVKFLPGFEGSLPFELETGYIGIGEEEEVQLFYYFIKSERNPKEDPLLLWLSGGPGCSSISGLLFENGPLAMKLDVYNGTLPSLVPTTYSWTKTSSMIFLDQPVGTGFSYSRTQQYNKPSDSGEAKRIHEFLQKWLSKHQEFSSNPFYVAGDSYSGMVVPATVQEISKGNYQCCSPPINLQGYVLGNPITEHAIDYNYRIPFAHGMALISDELYESLKRVCKGEYVDPRDTECLKLVEEFSKCTKGVCQEVVIKPLCVTETPNCYIYRYLLTTYWVNDVNVRKALQINKESIGEWVRCYFGIPYTHDIKSSVPYHMNNSINGYRSLIYSGDHDLNVPFLATQAWVRSLNYSIIDNWRPWMIKDQIGGYTKTYANKMTFATVRGGGHTAEYKPYETYIMFHRWINGQPL.

A signal peptide spans 1–28; the sequence is MANYISSVLKSLLLLLHLVFLIQQHVDS. Disulfide bonds link Cys87-Cys328, Cys251-Cys263, and Cys287-Cys294. The N-linked (GlcNAc...) asparagine glycan is linked to Asn108. Residue Ser183 is part of the active site. The N-linked (GlcNAc...) asparagine glycan is linked to Asn347. The active site involves Asp363. Asn379 carries an N-linked (GlcNAc...) asparagine glycan. His416 is an active-site residue.

This sequence belongs to the peptidase S10 family. In terms of tissue distribution, expressed in seedlings, roots, and siliques.

It localises to the secreted. Functionally, probable carboxypeptidase. In Arabidopsis thaliana (Mouse-ear cress), this protein is Serine carboxypeptidase-like 5 (SCPL5).